The following is a 664-amino-acid chain: Ent-copalyl diphosphate synthase 5 (664 aa).

Lys101 lines the substrate pocket. Mg(2+) is bound by residues Asp233 and Asp235. A DXDD motif motif is present at residues 233-236; that stretch reads DIDD. Residue Lys320 coordinates substrate.

This sequence belongs to the terpene synthase family. Tpsc subfamily. Mg(2+) serves as cofactor. As to expression, ubiquitous expression in roots, stems, leaves and flowers.

The protein localises to the plastid. It is found in the chloroplast. It carries out the reaction (2E,6E,10E)-geranylgeranyl diphosphate = ent-copalyl diphosphate. It participates in secondary metabolite biosynthesis; terpenoid biosynthesis. In terms of biological role, involved in the biosynthesis of ent-kaurene diterpenoids natural products such as oridonin, miltiradiene, eriocalyxin B and nezukol, known to exhibit antitumor, anti-inflammatory and antibacterial activities. Catalyzes the conversion of (2E,6E,10E)-geranylgeranyl diphosphate (GGPP) to ent-copalyl diphosphate (ent-CPP). The chain is Ent-copalyl diphosphate synthase 5 from Isodon rubescens (Rabdosia rubescens).